Reading from the N-terminus, the 524-residue chain is Ribosomal protein uS12 methylthiotransferase RimO (524 aa).

Polar residues predominate over residues Asn20 to Ala31. The disordered stretch occupies residues Asn20–Leu59. Over residues Glu48–Ser58 the composition is skewed to low complexity. The MTTase N-terminal domain occupies Pro67 to Pro177. [4Fe-4S] cluster-binding residues include Cys76, Cys112, Cys141, Cys216, Cys220, and Cys223. The 242-residue stretch at Leu202–Gln443 folds into the Radical SAM core domain. The TRAM domain occupies Gln446–Ala519.

Belongs to the methylthiotransferase family. RimO subfamily. The cofactor is [4Fe-4S] cluster.

Its subcellular location is the cytoplasm. The catalysed reaction is L-aspartate(89)-[ribosomal protein uS12]-hydrogen + (sulfur carrier)-SH + AH2 + 2 S-adenosyl-L-methionine = 3-methylsulfanyl-L-aspartate(89)-[ribosomal protein uS12]-hydrogen + (sulfur carrier)-H + 5'-deoxyadenosine + L-methionine + A + S-adenosyl-L-homocysteine + 2 H(+). In terms of biological role, catalyzes the methylthiolation of an aspartic acid residue of ribosomal protein uS12. This is Ribosomal protein uS12 methylthiotransferase RimO from Psychrobacter sp. (strain PRwf-1).